The chain runs to 74 residues: Protein SMIM7 homolog (74 aa).

The chain crosses the membrane as a helical span at residues 53 to 73 (FRAFIGLWNIFIMFLMLVFFG).

This sequence belongs to the SMIM7 family.

It is found in the membrane. This Ixodes scapularis (Black-legged tick) protein is Protein SMIM7 homolog.